The primary structure comprises 874 residues: Probable inorganic carbon transporter subunit DabA (874 aa).

Cys398, Asp400, His580, and Cys595 together coordinate Zn(2+).

This sequence belongs to the inorganic carbon transporter (TC 9.A.2) DabA family. As to quaternary structure, forms a complex with DabB. Zn(2+) is required as a cofactor.

The protein localises to the cell membrane. In terms of biological role, part of an energy-coupled inorganic carbon pump. This Bacillus cereus (strain 03BB102) protein is Probable inorganic carbon transporter subunit DabA.